The sequence spans 121 residues: Ribosome-binding factor A (121 aa).

The protein belongs to the RbfA family. Monomer. Binds 30S ribosomal subunits, but not 50S ribosomal subunits or 70S ribosomes.

Its subcellular location is the cytoplasm. Functionally, one of several proteins that assist in the late maturation steps of the functional core of the 30S ribosomal subunit. Associates with free 30S ribosomal subunits (but not with 30S subunits that are part of 70S ribosomes or polysomes). Required for efficient processing of 16S rRNA. May interact with the 5'-terminal helix region of 16S rRNA. The polypeptide is Ribosome-binding factor A (Agathobacter rectalis (strain ATCC 33656 / DSM 3377 / JCM 17463 / KCTC 5835 / VPI 0990) (Eubacterium rectale)).